The primary structure comprises 200 residues: Pyridoxal 5'-phosphate synthase subunit PdxT (200 aa).

Residue 52-54 (GES) participates in L-glutamine binding. Catalysis depends on Cys-84, which acts as the Nucleophile. L-glutamine contacts are provided by residues Arg-116 and 145-146 (IR). Active-site charge relay system residues include His-181 and Glu-183.

It belongs to the glutaminase PdxT/SNO family. In the presence of PdxS, forms a dodecamer of heterodimers. Only shows activity in the heterodimer.

It catalyses the reaction aldehydo-D-ribose 5-phosphate + D-glyceraldehyde 3-phosphate + L-glutamine = pyridoxal 5'-phosphate + L-glutamate + phosphate + 3 H2O + H(+). The catalysed reaction is L-glutamine + H2O = L-glutamate + NH4(+). It functions in the pathway cofactor biosynthesis; pyridoxal 5'-phosphate biosynthesis. Functionally, catalyzes the hydrolysis of glutamine to glutamate and ammonia as part of the biosynthesis of pyridoxal 5'-phosphate. The resulting ammonia molecule is channeled to the active site of PdxS. The protein is Pyridoxal 5'-phosphate synthase subunit PdxT of Saccharolobus islandicus (strain Y.N.15.51 / Yellowstone #2) (Sulfolobus islandicus).